The chain runs to 82 residues: Small ribosomal subunit protein bS16 (82 aa).

This sequence belongs to the bacterial ribosomal protein bS16 family.

This chain is Small ribosomal subunit protein bS16, found in Saccharophagus degradans (strain 2-40 / ATCC 43961 / DSM 17024).